The chain runs to 344 residues: MSAIVNHLPSEHPKVNFGKVGVLLVNLGTPDGTDYTSMRRYLREFLSDKRVIEWSRLFWYPILYGIVLNTRPGKVGKAYAEIWNNDLNESYLRTYTRNQAEKMAVSLTDMPNVVVDWAMRYGQPSIKSRMDALQKAGCEKILLFPLYPQYAAATTATVNDEAFKALLKMRWQPALRTVPQYSDDPVYIDALANSIEAHLASLDWEPELVLTSFHGIPKSYFMKGDPYHCQCYKTGRLLRERLGWPKEKLMVTFQSRFGPEEWLQPYTDKTVEKLAKDGVKRIAVINPGFVSDCLETLEEIAGEAGEIFHHAGGEKFSHIPCLNDSPDGMRVLENVVRRELQGWV.

2 residues coordinate Fe cation: H214 and E295.

It belongs to the ferrochelatase family.

The protein resides in the cytoplasm. It carries out the reaction heme b + 2 H(+) = protoporphyrin IX + Fe(2+). Its pathway is porphyrin-containing compound metabolism; protoheme biosynthesis; protoheme from protoporphyrin-IX: step 1/1. Its function is as follows. Catalyzes the ferrous insertion into protoporphyrin IX. In Allorhizobium ampelinum (strain ATCC BAA-846 / DSM 112012 / S4) (Agrobacterium vitis (strain S4)), this protein is Ferrochelatase.